The following is a 530-amino-acid chain: Ankyrin repeat domain-containing protein 53 (530 aa).

Over residues 1–15 (MASAGSTARRAGSGS) the composition is skewed to low complexity. Positions 1–99 (MASAGSTARR…PSPSKESDQT (99 aa)) are disordered. A compositionally biased stretch (polar residues) spans 32-41 (PSGSMQQANK). ANK repeat units lie at residues 139 to 169 (KGFT…PVDL), 173 to 206 (NSQT…DLNA), and 210 to 239 (NGST…NVHA). Disordered regions lie at residues 323–360 (GHSL…VDAR) and 383–402 (PTMW…QISH). 2 stretches are compositionally biased toward polar residues: residues 326 to 341 (LVSN…LSKT) and 386 to 402 (WNVS…QISH).

Interacts with PSRC1; recruited by PSRC1 to the spindle during mitosis. Phosphorylated during mitosis.

The protein localises to the cytoplasm. The protein resides in the cytoskeleton. It localises to the spindle. Its subcellular location is the spindle pole. Functionally, required for normal progression through mitosis. Involved in chromosome alignment and cytokinesis via regulation of microtubules polymerization. This Homo sapiens (Human) protein is Ankyrin repeat domain-containing protein 53 (ANKRD53).